Here is a 341-residue protein sequence, read N- to C-terminus: MPRPFFHKLIFSSTIQEKRLRVPDKFVSKFKDELSVAVALTVPDGHVWRVGLRKADNKIWFQDGWQEFVDRYSIRIGYLLIFRYEGNSAFSVYIFNLSHSEINYHSTGLMDSAHNHFKRARLFEDLEDEDAEVIFPSSVYPSPLPESTVPANKGYASSAIQTLFTGPVKAEEPTPTPKIPKKRGRKKKNADPEEINSSAPRDDDPENRSKFYESASARKRTVTAEERERAINAAKTFEPTNPFFRVVLRPSYLYRGCIMYLPSGFAEKYLSGISGFIKVQLAEKQWPVRCLYKAGRAKFSQGWYEFTLENNLGEGDVCVFELLRTRDFVLKVTAFRVNEYV.

The TF-B3 1 DNA-binding region spans 5 to 98 (FFHKLIFSST…AFSVYIFNLS (94 aa)). Positions 166–223 (GPVKAEEPTPTPKIPKKRGRKKKNADPEEINSSAPRDDDPENRSKFYESASARKRTVT) are disordered. The segment covering 179–188 (IPKKRGRKKK) has biased composition (basic residues). Residues 200–211 (PRDDDPENRSKF) are compositionally biased toward basic and acidic residues. Residues 244 to 338 (FRVVLRPSYL…VLKVTAFRVN (95 aa)) constitute a DNA-binding region (TF-B3 2).

Expressed in roots and at lower levels in aerial parts.

The protein localises to the nucleus. Its function is as follows. Essential protein. Involved in the regulation of vernalization. Acts as a transcriptional repressor of FLC, a major target of the vernalization pathway. Binds DNA in vitro in a non-sequence-specific manner. This is B3 domain-containing transcription factor VRN1 from Arabidopsis thaliana (Mouse-ear cress).